Consider the following 876-residue polypeptide: Radial spoke head 10 homolog B (876 aa).

Residues 1 to 16 are compositionally biased toward basic and acidic residues; sequence MVKEKKKADKKGDKSA. A disordered region spans residues 1-71; that stretch reads MVKEKKKADK…VQMEQSEEET (71 aa). Residues 17–37 show a composition bias toward polar residues; the sequence is RSPSSISDNPEASKQDSNASK. The segment covering 39–50 has biased composition (low complexity); it reads EVAPSAVVPVVE. MORN repeat units follow at residues 86–108, 109–129, 132–154, 155–172, 179–196, 204–225, 227–244, 251–268, 284–305, and 307–328; these read YEGE…GGNT, YHGM…WADG, YEGD…DGST, YEGE…MFKC, YIGH…SIYY, YEGD…KSGN, YEGQ…RMRW, YTGH…THTW, YIGE…ASGA, and YEGE…KNGH. The span at 356–372 shows a compositional bias: polar residues; the sequence is WSDASQRSRQPRGSSVS. Residues 356–386 are disordered; the sequence is WSDASQRSRQPRGSSVSAVREPETLRKLDGS. The span at 375–386 shows a compositional bias: basic and acidic residues; the sequence is REPETLRKLDGS. Positions 790-832 form a coiled coil; sequence LKEKVKENQLQEAELAQQRQIENEELEARLNILREEEARKQDF. Residues 839–876 form a disordered region; that stretch reads LKEPSEIPASQPLTPSPPKEDLASIQTSKASPGKKKKK.

As to quaternary structure, interacts with RSPH6A. Does not appear to be part of the axonemal radial spoke complexes 1 or 2. In terms of tissue distribution, expressed in ependymal cells (at protein level).

The protein resides in the cytoplasm. It localises to the cytoskeleton. The protein localises to the cilium axoneme. It is found in the cell projection. Its subcellular location is the cilium. The protein resides in the flagellum. Functionally, may function as part of the axonemal radial spoke complex 3 (RS3). Radial spoke complexes are important for ciliary motility. The protein is Radial spoke head 10 homolog B of Mus musculus (Mouse).